Reading from the N-terminus, the 878-residue chain is Phosphoenolpyruvate carboxylase (878 aa).

Residues histidine 137 and lysine 545 contribute to the active site.

The protein belongs to the PEPCase type 1 family. It depends on Mg(2+) as a cofactor.

It carries out the reaction oxaloacetate + phosphate = phosphoenolpyruvate + hydrogencarbonate. Its function is as follows. Forms oxaloacetate, a four-carbon dicarboxylic acid source for the tricarboxylic acid cycle. This Proteus mirabilis (strain HI4320) protein is Phosphoenolpyruvate carboxylase.